The sequence spans 495 residues: Phage-like element PBSX protein XkdE (495 aa).

This sequence belongs to the phage portal family. PBSX subfamily.

This chain is Phage-like element PBSX protein XkdE (xkdE), found in Bacillus subtilis (strain 168).